The primary structure comprises 155 residues: Ubiquitin-conjugating enzyme E2 14 (155 aa).

The region spanning 7–154 (SSSRRLTKEY…ARDYVEQFAK (148 aa)) is the UBC core domain. The Glycyl thioester intermediate role is filled by C91.

The protein belongs to the ubiquitin-conjugating enzyme family.

It carries out the reaction S-ubiquitinyl-[E1 ubiquitin-activating enzyme]-L-cysteine + [E2 ubiquitin-conjugating enzyme]-L-cysteine = [E1 ubiquitin-activating enzyme]-L-cysteine + S-ubiquitinyl-[E2 ubiquitin-conjugating enzyme]-L-cysteine.. It functions in the pathway protein modification; protein ubiquitination. In terms of biological role, catalyzes the covalent attachment of ubiquitin to other proteins. Mediates the selective degradation of short-lived and abnormal proteins. The chain is Ubiquitin-conjugating enzyme E2 14 (ubc14) from Schizosaccharomyces pombe (strain 972 / ATCC 24843) (Fission yeast).